The sequence spans 378 residues: GDP-mannose 3,5-epimerase 1 (378 aa).

Residues 36–62 (GAGGFIGSHIARRLKSEGHYIIASDWK), aspartate 60, and aspartate 80 each bind NAD(+). Substrate-binding positions include glycine 105 and 145-147 (SAC). Tyrosine 175 and lysine 179 together coordinate NAD(+). The Proton acceptor role is filled by tyrosine 175. Substrate is bound by residues asparagine 204, 217-219 (EKA), lysine 226, 242-244 (QTR), arginine 307, and serine 357.

The protein belongs to the NAD(P)-dependent epimerase/dehydratase family. Homodimer. NAD(+) is required as a cofactor.

The enzyme catalyses GDP-alpha-D-mannose = GDP-beta-L-gulose. It carries out the reaction GDP-beta-L-gulose = GDP-beta-L-galactose. Its pathway is cofactor biosynthesis; L-ascorbate biosynthesis via GDP-alpha-D-mannose pathway; L-ascorbate from GDP-alpha-D-mannose: step 1/5. In terms of biological role, catalyzes a reversible epimerization of GDP-D-mannose that precedes the committed step in the biosynthesis of vitamin C (L-ascorbate), resulting in the hydrolysis of the highly energetic glycosyl-pyrophosphoryl linkage. Able to catalyze 2 distinct epimerization reactions and can release both GDP-L-galactose and GDP-L-gulose from GDP-mannose. The sequence is that of GDP-mannose 3,5-epimerase 1 from Oryza sativa subsp. indica (Rice).